Consider the following 89-residue polypeptide: MSDNTEKKTLRTVEGRVVSNKMDKTVTVLVERQVKHALYGKYIKRSTKLHAHDADNACKEGDVVRVTEIAPMSKTKNWRVVEVITRAAE.

Belongs to the universal ribosomal protein uS17 family. Part of the 30S ribosomal subunit.

One of the primary rRNA binding proteins, it binds specifically to the 5'-end of 16S ribosomal RNA. The protein is Small ribosomal subunit protein uS17 of Stenotrophomonas maltophilia (strain K279a).